Consider the following 308-residue polypeptide: Microtubule integrity protein mal3 (308 aa).

One can recognise a Calponin-homology (CH) domain in the interval 2 to 103; the sequence is SESRQELLAW…FVQWAKRFWD (102 aa). The disordered stretch occupies residues 117–162; the sequence is RGNRGPANTRVMNSSAGATGPSRRRQVSSGSSTPSMTKSSANNNNV. A compositionally biased stretch (low complexity) spans 144–162; sequence SSGSSTPSMTKSSANNNNV. Residues 173–247 enclose the EB1 C-terminal domain; it reads RAKQAQQQIT…LYSTEDGFEL (75 aa).

This sequence belongs to the MAPRE family. As to quaternary structure, interacts with tea2.

It is found in the cytoplasm. Its subcellular location is the cytoskeleton. Functionally, may play a role in regulating the integrity of microtubules possibly by influencing their stability. Involved in an anchoring mechanism to maintain tea2 and tip1 at growing microtubule ends. Strongly stimulates the ATPase activity of tea2. This Schizosaccharomyces pombe (strain 972 / ATCC 24843) (Fission yeast) protein is Microtubule integrity protein mal3 (mal3).